The chain runs to 44 residues: Photosystem II reaction center protein K (44 aa).

The propeptide occupies Met-1–Ala-7. The chain crosses the membrane as a helical span at residues Leu-23–Phe-43.

The protein belongs to the PsbK family. In terms of assembly, PSII is composed of 1 copy each of membrane proteins PsbA, PsbB, PsbC, PsbD, PsbE, PsbF, PsbH, PsbI, PsbJ, PsbK, PsbL, PsbM, PsbT, PsbX, PsbY, PsbZ, Psb30/Ycf12, at least 3 peripheral proteins of the oxygen-evolving complex and a large number of cofactors. It forms dimeric complexes.

The protein localises to the plastid. It is found in the chloroplast thylakoid membrane. Its function is as follows. One of the components of the core complex of photosystem II (PSII). PSII is a light-driven water:plastoquinone oxidoreductase that uses light energy to abstract electrons from H(2)O, generating O(2) and a proton gradient subsequently used for ATP formation. It consists of a core antenna complex that captures photons, and an electron transfer chain that converts photonic excitation into a charge separation. The chain is Photosystem II reaction center protein K from Trieres chinensis (Marine centric diatom).